Here is a 370-residue protein sequence, read N- to C-terminus: Ferrochelatase (370 aa).

His210 and Glu291 together coordinate Fe cation.

Belongs to the ferrochelatase family.

It localises to the cytoplasm. The enzyme catalyses heme b + 2 H(+) = protoporphyrin IX + Fe(2+). Its pathway is porphyrin-containing compound metabolism; protoheme biosynthesis; protoheme from protoporphyrin-IX: step 1/1. Catalyzes the ferrous insertion into protoporphyrin IX. The polypeptide is Ferrochelatase (Marinobacter nauticus (strain ATCC 700491 / DSM 11845 / VT8) (Marinobacter aquaeolei)).